The sequence spans 59 residues: Large ribosomal subunit protein bL32 (59 aa).

A disordered region spans residues 1 to 59; it reads MAVQQNRKSRSRRGMRRSHDALSSAALSIDPTTGEKHRRHHVTPDGFYRGKKVVEVSQD. Residues 7–16 show a composition bias toward basic residues; it reads RKSRSRRGMR.

The protein belongs to the bacterial ribosomal protein bL32 family.

In Hahella chejuensis (strain KCTC 2396), this protein is Large ribosomal subunit protein bL32.